We begin with the raw amino-acid sequence, 154 residues long: Putative pre-16S rRNA nuclease (154 aa).

The protein belongs to the YqgF nuclease family.

The protein resides in the cytoplasm. Could be a nuclease involved in processing of the 5'-end of pre-16S rRNA. The protein is Putative pre-16S rRNA nuclease of Gluconacetobacter diazotrophicus (strain ATCC 49037 / DSM 5601 / CCUG 37298 / CIP 103539 / LMG 7603 / PAl5).